Reading from the N-terminus, the 272-residue chain is MPELPEVETTRRGIAPHILHHPITAVTLRHTQLRWPIDKALSRNLPGRTLVRADRRGKYLLLAVDDGRTLIWHLGMSGSLRIVEPTEPPGKHDHIDLRFAHGRVLRYHDPRRFGAFLATADDPAQHALICHLGPEPLTDDFNGEYLYERSRKRSTAVKSWIMDSRVVVGVGNIYANESLFLAKIHPLRAAGKLTRPACHRLADIIKAVLARSITQGGTTLRDFVGGDGKPGYFAQQLNVYGRGGEPCPVCAKPLTEKPLSQRTTVYCTHCQN.

The Schiff-base intermediate with DNA role is filled by Pro2. Glu3 serves as the catalytic Proton donor. Residue Lys58 is the Proton donor; for beta-elimination activity of the active site. The DNA site is built by His92, Arg111, and Arg153. Residues 238–272 (NVYGRGGEPCPVCAKPLTEKPLSQRTTVYCTHCQN) form an FPG-type zinc finger. The active-site Proton donor; for delta-elimination activity is the Arg262.

The protein belongs to the FPG family. As to quaternary structure, monomer. Zn(2+) is required as a cofactor.

It catalyses the reaction Hydrolysis of DNA containing ring-opened 7-methylguanine residues, releasing 2,6-diamino-4-hydroxy-5-(N-methyl)formamidopyrimidine.. It carries out the reaction 2'-deoxyribonucleotide-(2'-deoxyribose 5'-phosphate)-2'-deoxyribonucleotide-DNA = a 3'-end 2'-deoxyribonucleotide-(2,3-dehydro-2,3-deoxyribose 5'-phosphate)-DNA + a 5'-end 5'-phospho-2'-deoxyribonucleoside-DNA + H(+). In terms of biological role, involved in base excision repair of DNA damaged by oxidation or by mutagenic agents. Acts as a DNA glycosylase that recognizes and removes damaged bases. Has a preference for oxidized purines, such as 7,8-dihydro-8-oxoguanine (8-oxoG). Has AP (apurinic/apyrimidinic) lyase activity and introduces nicks in the DNA strand. Cleaves the DNA backbone by beta-delta elimination to generate a single-strand break at the site of the removed base with both 3'- and 5'-phosphates. The chain is Formamidopyrimidine-DNA glycosylase from Teredinibacter turnerae (strain ATCC 39867 / T7901).